Here is a 477-residue protein sequence, read N- to C-terminus: Glycogen synthase 1 (477 aa).

Lysine 15 lines the ADP-alpha-D-glucose pocket.

The protein belongs to the glycosyltransferase 1 family. Bacterial/plant glycogen synthase subfamily.

The enzyme catalyses [(1-&gt;4)-alpha-D-glucosyl](n) + ADP-alpha-D-glucose = [(1-&gt;4)-alpha-D-glucosyl](n+1) + ADP + H(+). It functions in the pathway glycan biosynthesis; glycogen biosynthesis. Its function is as follows. Synthesizes alpha-1,4-glucan chains using ADP-glucose. This chain is Glycogen synthase 1 (glgA1), found in Synechocystis sp. (strain ATCC 27184 / PCC 6803 / Kazusa).